A 322-amino-acid chain; its full sequence is 4-diphosphocytidyl-2-C-methyl-D-erythritol kinase (322 aa).

The active site involves Lys-25. 110–120 (PVAGGMAGGSA) lines the ATP pocket. The active site involves Asp-152.

Belongs to the GHMP kinase family. IspE subfamily.

The enzyme catalyses 4-CDP-2-C-methyl-D-erythritol + ATP = 4-CDP-2-C-methyl-D-erythritol 2-phosphate + ADP + H(+). It participates in isoprenoid biosynthesis; isopentenyl diphosphate biosynthesis via DXP pathway; isopentenyl diphosphate from 1-deoxy-D-xylulose 5-phosphate: step 3/6. Its function is as follows. Catalyzes the phosphorylation of the position 2 hydroxy group of 4-diphosphocytidyl-2C-methyl-D-erythritol. This is 4-diphosphocytidyl-2-C-methyl-D-erythritol kinase from Mycolicibacterium gilvum (strain PYR-GCK) (Mycobacterium gilvum (strain PYR-GCK)).